The chain runs to 483 residues: Probable cytosol aminopeptidase (483 aa).

The Mn(2+) site is built by Lys-244 and Asp-249. Lys-256 is an active-site residue. 3 residues coordinate Mn(2+): Asp-267, Asp-326, and Glu-328. Arg-330 is a catalytic residue.

Belongs to the peptidase M17 family. Requires Mn(2+) as cofactor.

The protein resides in the cytoplasm. The catalysed reaction is Release of an N-terminal amino acid, Xaa-|-Yaa-, in which Xaa is preferably Leu, but may be other amino acids including Pro although not Arg or Lys, and Yaa may be Pro. Amino acid amides and methyl esters are also readily hydrolyzed, but rates on arylamides are exceedingly low.. It carries out the reaction Release of an N-terminal amino acid, preferentially leucine, but not glutamic or aspartic acids.. Presumably involved in the processing and regular turnover of intracellular proteins. Catalyzes the removal of unsubstituted N-terminal amino acids from various peptides. The sequence is that of Probable cytosol aminopeptidase from Campylobacter jejuni subsp. jejuni serotype O:2 (strain ATCC 700819 / NCTC 11168).